Reading from the N-terminus, the 157-residue chain is Small ribosomal subunit protein uS9 (157 aa).

Belongs to the universal ribosomal protein uS9 family.

The protein is Small ribosomal subunit protein uS9 of Caulobacter vibrioides (strain ATCC 19089 / CIP 103742 / CB 15) (Caulobacter crescentus).